The chain runs to 146 residues: Hemoglobin subunit beta (146 aa).

Positions His-2–His-146 constitute a Globin domain. The heme b site is built by His-63 and His-92.

The protein belongs to the globin family. In terms of assembly, heterotetramer of two alpha chains and two beta chains. As to expression, red blood cells.

In terms of biological role, involved in oxygen transport from the lung to the various peripheral tissues. The protein is Hemoglobin subunit beta (HBB) of Columba livia (Rock dove).